The chain runs to 591 residues: Oxaloacetate decarboxylase alpha chain (591 aa).

Positions 3–263 constitute a Pyruvate carboxyltransferase domain; the sequence is IAITDVVLRD…DTGLDILKLE (261 aa). One can recognise a Biotinyl-binding domain in the interval 518 to 591; sequence PAGAGTPVTA…SVGDTLMTLA (74 aa). Lys-557 carries the N6-biotinyllysine modification.

In terms of assembly, composed of three chains (alpha, beta, and gamma). The cofactor is biotin.

It carries out the reaction oxaloacetate + 2 Na(+)(in) + H(+) = pyruvate + 2 Na(+)(out) + CO2. Functionally, catalyzes the decarboxylation of oxaloacetate coupled to Na(+) translocation. The chain is Oxaloacetate decarboxylase alpha chain (oadA1) from Salmonella typhi.